The following is an 890-amino-acid chain: DNA mismatch repair protein MutS (890 aa).

Gly645–Ser652 is a binding site for ATP.

It belongs to the DNA mismatch repair MutS family.

In terms of biological role, this protein is involved in the repair of mismatches in DNA. It is possible that it carries out the mismatch recognition step. This protein has a weak ATPase activity. This Rickettsia conorii (strain ATCC VR-613 / Malish 7) protein is DNA mismatch repair protein MutS.